The primary structure comprises 368 residues: Guanylate binding protein 128up (368 aa).

A (3S)-3-hydroxylysine modification is found at lysine 22. Positions 65-290 (ARVGFVGFPS…LLELMWEYLR (226 aa)) constitute an OBG-type G domain. GTP is bound by residues 71-78 (GFPSVGKS), 117-121 (DLPGI), and 248-251 (NKID). The region spanning 290-366 (RLQRIYTKPK…NDEDVVQIVK (77 aa)) is the TGS domain.

This sequence belongs to the TRAFAC class OBG-HflX-like GTPase superfamily. OBG GTPase family. In terms of processing, hydroxylated (with S stereochemistry) at C-3 of Lys-22 by JMJD7. In terms of tissue distribution, expressed in posterior-lateral epidermis of the maxillary lobe.

In terms of biological role, catalyzes the conversion of GTP to GDP through hydrolysis of the gamma-phosphate bond in GTP. Dfd/deformed is required to activate 128up in maxillary segment cells. The chain is Guanylate binding protein 128up from Drosophila melanogaster (Fruit fly).